The sequence spans 288 residues: Phosphate import ATP-binding protein PstB (288 aa).

Residues 42-283 enclose the ABC transporter domain; the sequence is IRDLNFYYEN…PKEKKTRDYI (242 aa). 74 to 81 lines the ATP pocket; sequence GPSGCGKS.

It belongs to the ABC transporter superfamily. Phosphate importer (TC 3.A.1.7) family. As to quaternary structure, the complex is composed of two ATP-binding proteins (PstB), two transmembrane proteins (PstC and PstA) and a solute-binding protein (PstS).

Its subcellular location is the cell membrane. The catalysed reaction is phosphate(out) + ATP + H2O = ADP + 2 phosphate(in) + H(+). Its function is as follows. Part of the ABC transporter complex PstSACB involved in phosphate import. Responsible for energy coupling to the transport system. In Malacoplasma penetrans (strain HF-2) (Mycoplasma penetrans), this protein is Phosphate import ATP-binding protein PstB.